A 678-amino-acid polypeptide reads, in one-letter code: Putative pentatricopeptide repeat-containing protein At3g18840 (678 aa).

16 PPR repeats span residues 22 to 56 (TAVS…NVYS), 57 to 84 (WNAV…NCER), 85 to 116 (DLIT…MHRK), 124 to 158 (DDFT…GNDG), 159 to 190 (TKFA…CVEF), 192 to 222 (DSVA…NPEL), 224 to 258 (DTIS…GLKW), 259 to 293 (DEHS…GSYS), 294 to 324 (NKFV…YGFG), 325 to 359 (NLYS…NLVV), 360 to 390 (WTAM…ETNT), 392 to 426 (DSLV…GILM), 427 to 457 (DKKL…SFER), 458 to 492 (DTVM…GFKP), 493 to 528 (DEIT…NISP), and 529 to 563 (ETGH…EKDA). Positions 565-640 (ILGAFLNACS…FSGCSWANID (76 aa)) are type E motif. The segment at 641-671 (KQFHMFTSSDISHYETEAIYAMLHFVTKDLS) is type E(+) motif.

The protein belongs to the PPR family. PCMP-E subfamily.

The protein is Putative pentatricopeptide repeat-containing protein At3g18840 (PCMP-E92) of Arabidopsis thaliana (Mouse-ear cress).